We begin with the raw amino-acid sequence, 2221 residues long: MVNENTRMYIPEENHQGSNYGSPRPAHANMNANAAAGLAPEHIPTPGAALSWQAAIDAARQAKLMGSAGNATISTVSSTQRKRQQYGKPKKQGSTTATRPPRALLCLTLKNPIRRACISIVEWKPFEIIILLTIFANCVALAIYIPFPEDDSNATNSNLERVEYLFLIIFTVEAFLKVIAYGLLFHPNAYLRNGWNLLDFIIVVVGLFSAILEQATKADGANALGGKGAGFDVKALRAFRVLRPLRLVSGVPSLQVVLNSIIKAMVPLLHIALLVLFVIIIYAIIGLELFMGKMHKTCYNQEGIADVPAEDDPSPCALETGHGRQCQNGTVCKPGWDGPKHGITNFDNFAFAMLTVFQCITMEGWTDVLYWVNDAVGRDWPWIYFVTLIIIGSFFVLNLVLGVLSGEFSKEREKAKARGDFQKLREKQQLEEDLKGYLDWITQAEDIDPENEDEGMDEEKPRNMSMPTSETESVNTENVAGGDIEGENCGARLAHRISKSKFSRYWRRWNRFCRRKCRAAVKSNVFYWLVIFLVFLNTLTIASEHYNQPNWLTEVQDTANKALLALFTAEMLLKMYSLGLQAYFVSLFNRFDCFVVCGGILETILVETKIMSPLGISVLRCVRLLRIFKITRYWNSLSNLVASLLNSVRSIASLLLLLFLFIIIFSLLGMQLFGGKFNFDEMQTRRSTFDNFPQSLLTVFQILTGEDWNSVMYDGIMAYGGPSFPGMLVCIYFIILFICGNYILLNVFLAIAVDNLADAESLTSAQKEEEEEKERKKLARTASPEKKQELVEKPAVGESKEEKIELKSITADGESPPATKINMDDLQPNENEDKSPYPNPETTGEEDEEEPEMPVGPRPRPLSELHLKEKAVPMPEASAFFIFSSNNRFRLQCHRIVNDTIFTNLILFFILLSSISLAAEDPVQHTSFRNHILFYFDIVFTTIFTIEIALKILGNADYVFTSIFTLEIILKMTAYGAFLHKGSFCRNYFNILDLLVVSVSLISFGIQSSAINVVKILRVLRVLRPLRAINRAKGLKHVVQCVFVAIRTIGNIVIVTTLLQFMFACIGVQLFKGKLYTCSDSSKQTEAECKGNYITYKDGEVDHPIIQPRSWENSKFDFDNVLAAMMALFTVSTFEGWPELLYRSIDSHTEDKGPIYNYRVEISIFFIIYIIIIAFFMMNIFVGFVIVTFQEQGEQEYKNCELDKNQRQCVEYALKARPLRRYIPKNQHQYKVWYVVNSTYFEYLMFVLILLNTICLAMQHYGQSCLFKIAMNILNMLFTGLFTVEMILKLIAFKPKGYFSDPWNVFDFLIVIGSIIDVILSETNHYFCDAWNTFDALIVVGSIVDIAITEVNPAEHTQCSPSMNAEENSRISITFFRLFRVMRLVKLLSRGEGIRTLLWTFIKSFQALPYVALLIVMLFFIYAVIGMQVFGKIALNDTTEINRNNNFQTFPQAVLLLFRCATGEAWQDIMLACMPGKKCAPESEPSNSTEGETPCGSSFAVFYFISFYMLCAFLIINLFVAVIMDNFDYLTRDWSILGPHHLDEFKRIWAEYDPEAKGRIKHLDVVTLLRRIQPPLGFGKLCPHRVACKRLVSMNMPLNSDGTVMFNATLFALVRTALRIKTEGNLEQANEELRAIIKKIWKRTSMKLLDQVVPPAGDDEVTVGKFYATFLIQEYFRKFKKRKEQGLVGKPSQRNALSLQAGLRTLHDIGPEIRRAISGDLTAEEELDKAMKEAVSAASEDDIFRRAGGLFGNHVSYYQSDGRSAFPQTFTTQRPLHINKAGSSQGDTESPSHEKLVDSTFTPSSYSSTGSNANINNANNTALGRLPRPAGYPSTVSTVEGHGPPLSPAIRVQEVAWKLSSNRERHVPMCEDLELRRDSGSAGTQAHCLLLRKANPSRCHSRESQAAMAGQEETSQDETYEVKMNHDTEACSEPSLLSTEMLSYQDDENRQLTLPEEDKRDIRQSPKRGFLRSASLGRRASFHLECLKRQKDRGGDISQKTVLPLHLVHHQALAVAGLSPLLQRSHSPASFPRPFATPPATPGSRGWPPQPVPTLRLEGVESSEKLNSSFPSIHCGSWAETTPGGGGSSAARRVRPVSLMVPSQAGAPGRQFHGSASSLVEAVLISEGLGQFAQDPKFIEVTTQELADACDMTIEEMESAADNILSGGAPQSPNGALLPFVNCRDAGQDRAGGEEDAGCVRARGRPSEEELQDSRVYVSSL.

Positions 1-20 (MVNENTRMYIPEENHQGSNY) are disordered. Residues 1-124 (MVNENTRMYI…RACISIVEWK (124 aa)) lie on the Cytoplasmic side of the membrane. The segment at 47–68 (GAALSWQAAIDAARQAKLMGSA) is calmodulin-binding. The tract at residues 73–98 (ISTVSSTQRKRQQYGKPKKQGSTTAT) is disordered. Positions 80-91 (QRKRQQYGKPKK) are enriched in basic residues. An I repeat occupies 111–408 (NPIRRACISI…LVLGVLSGEF (298 aa)). A helical transmembrane segment spans residues 125–143 (PFEIIILLTIFANCVALAI). Over 144–158 (YIPFPEDDSNATNSN) the chain is Extracellular. Asn153 is a glycosylation site (N-linked (GlcNAc...) asparagine). A helical transmembrane segment spans residues 159-179 (LERVEYLFLIIFTVEAFLKVI). The Cytoplasmic segment spans residues 180–188 (AYGLLFHPN). Residues 189–209 (AYLRNGWNLLDFIIVVVGLFS) traverse the membrane as a helical segment. Residues 210–232 (AILEQATKADGANALGGKGAGFD) are Extracellular-facing. Residues 233 to 251 (VKALRAFRVLRPLRLVSGV) traverse the membrane as a helical segment. At 252 to 268 (PSLQVVLNSIIKAMVPL) the chain is on the cytoplasmic side. Residues 269-290 (LHIALLVLFVIIIYAIIGLELF) traverse the membrane as a helical segment. At 291–350 (MGKMHKTCYNQEGIADVPAEDDPSPCALETGHGRQCQNGTVCKPGWDGPKHGITNFDNFA) the chain is on the extracellular side. Intrachain disulfides connect Cys298/Cys326 and Cys316/Cys332. The N-linked (GlcNAc...) asparagine glycan is linked to Asn328. The segment at residues 351 to 372 (FAMLTVFQCITMEGWTDVLYWV) is an intramembrane region (pore-forming). The Selectivity filter of repeat I motif lies at 361-364 (TMEG). Glu363 is a Ca(2+) binding site. Residues 373 to 380 (NDAVGRDW) lie on the Extracellular side of the membrane. Residues 381–401 (PWIYFVTLIIIGSFFVLNLVL) traverse the membrane as a helical segment. At 402–524 (GVLSGEFSKE…RKCRAAVKSN (123 aa)) the chain is on the cytoplasmic side. The interval 428–445 (QQLEEDLKGYLDWITQAE) is AID/alpha-interaction domain; mediates interaction with the beta subunit. The interval 449 to 481 (PENEDEGMDEEKPRNMSMPTSETESVNTENVAG) is disordered. Residues 465–478 (SMPTSETESVNTEN) are compositionally biased toward polar residues. Ser469 carries the post-translational modification Phosphoserine. Thr476 is modified (phosphothreonine). The II repeat unit spans residues 510-756 (NRFCRRKCRA…VFLAIAVDNL (247 aa)). The helical transmembrane segment at 525–543 (VFYWLVIFLVFLNTLTIAS) threads the bilayer. Over 544-554 (EHYNQPNWLTE) the chain is Extracellular. Residues 555–575 (VQDTANKALLALFTAEMLLKM) form a helical membrane-spanning segment. At 576–586 (YSLGLQAYFVS) the chain is on the cytoplasmic side. The chain crosses the membrane as a helical span at residues 587–606 (LFNRFDCFVVCGGILETILV). Residues 607-615 (ETKIMSPLG) are Extracellular-facing. A helical transmembrane segment spans residues 616–634 (ISVLRCVRLLRIFKITRYW). Residues 635–653 (NSLSNLVASLLNSVRSIAS) are Cytoplasmic-facing. Residues 654–673 (LLLLLFLFIIIFSLLGMQLF) form a helical membrane-spanning segment. The Extracellular portion of the chain corresponds to 674–693 (GGKFNFDEMQTRRSTFDNFP). The pore-forming intramembrane region spans 694–715 (QSLLTVFQILTGEDWNSVMYDG). A Selectivity filter of repeat II motif is present at residues 704–707 (TGED). Glu706 is a binding site for Ca(2+). At 716–725 (IMAYGGPSFP) the chain is on the extracellular side. The helical transmembrane segment at 726-745 (GMLVCIYFIILFICGNYILL) threads the bilayer. Over 746 to 900 (NVFLAIAVDN…LQCHRIVNDT (155 aa)) the chain is Cytoplasmic. The interval 764–861 (SAQKEEEEEK…EMPVGPRPRP (98 aa)) is disordered. Positions 783-792 (SPEKKQELVE) are enriched in basic and acidic residues. 2 positions are modified to phosphoserine: Ser808 and Ser815. Residues 829–876 (NENEDKSPYPNPETTGEEDEEEPEMPVGPRPRPLSELHLKEKAVPMPE) are interaction with STAC2. Positions 843–852 (TGEEDEEEPE) are enriched in acidic residues. The III repeat unit spans residues 887 to 1189 (NRFRLQCHRI…IFVGFVIVTF (303 aa)). Residues 901 to 919 (IFTNLILFFILLSSISLAA) traverse the membrane as a helical segment. At 920–931 (EDPVQHTSFRNH) the chain is on the extracellular side. The chain crosses the membrane as a helical span at residues 932 to 952 (ILFYFDIVFTTIFTIEIALKI). At 953-987 (LGNADYVFTSIFTLEIILKMTAYGAFLHKGSFCRN) the chain is on the cytoplasmic side. Residues 988–1006 (YFNILDLLVVSVSLISFGI) form a helical membrane-spanning segment. Over 1007 to 1013 (QSSAINV) the chain is Extracellular. The chain crosses the membrane as a helical span at residues 1014–1032 (VKILRVLRVLRPLRAINRA). Topologically, residues 1033–1051 (KGLKHVVQCVFVAIRTIGN) are cytoplasmic. Residues 1052–1071 (IVIVTTLLQFMFACIGVQLF) form a helical membrane-spanning segment. The Extracellular segment spans residues 1072 to 1121 (KGKLYTCSDSSKQTEAECKGNYITYKDGEVDHPIIQPRSWENSKFDFDNV). A disulfide bond links Cys1078 and Cys1089. The dihydropyridine binding stretch occupies residues 1109-1198 (RSWENSKFDF…FQEQGEQEYK (90 aa)). The segment at residues 1122–1142 (LAAMMALFTVSTFEGWPELLY) is an intramembrane region (pore-forming). The Selectivity filter of repeat III signature appears at 1133–1136 (TFEG). Glu1135 lines the Ca(2+) pocket. The Extracellular portion of the chain corresponds to 1143–1159 (RSIDSHTEDKGPIYNYR). The chain crosses the membrane as a helical span at residues 1160–1181 (VEISIFFIIYIIIIAFFMMNIF). Over 1182-1239 (VGFVIVTFQEQGEQEYKNCELDKNQRQCVEYALKARPLRRYIPKNQHQYKVWYVVNST) the chain is Cytoplasmic. The stretch at 1226–1527 (NQHQYKVWYV…LFVAVIMDNF (302 aa)) is one IV repeat. The chain crosses the membrane as a helical span at residues 1240–1261 (YFEYLMFVLILLNTICLAMQHY). Residues 1262 to 1269 (GQSCLFKI) lie on the Extracellular side of the membrane. Residues 1270–1291 (AMNILNMLFTGLFTVEMILKLI) form a helical membrane-spanning segment. Over 1292-1301 (AFKPKGYFSD) the chain is Cytoplasmic. Residues 1302 to 1321 (PWNVFDFLIVIGSIIDVILS) traverse the membrane as a helical segment. Topologically, residues 1322-1372 (ETNHYFCDAWNTFDALIVVGSIVDIAITEVNPAEHTQCSPSMNAEENSRIS) are extracellular. Residues 1373-1391 (ITFFRLFRVMRLVKLLSRG) traverse the membrane as a helical segment. The Cytoplasmic portion of the chain corresponds to 1392 to 1409 (EGIRTLLWTFIKSFQALP). Residues 1410-1430 (YVALLIVMLFFIYAVIGMQVF) traverse the membrane as a helical segment. Residues 1431 to 1452 (GKIALNDTTEINRNNNFQTFPQ) are Extracellular-facing. Asn1436 carries N-linked (GlcNAc...) asparagine glycosylation. The segment at residues 1453–1471 (AVLLLFRCATGEAWQDIML) is an intramembrane region (pore-forming). A Selectivity filter of repeat IV motif is present at residues 1462 to 1465 (TGEA). The Extracellular portion of the chain corresponds to 1472 to 1499 (ACMPGKKCAPESEPSNSTEGETPCGSSF). The dihydropyridine binding stretch occupies residues 1478–1546 (KCAPESEPSN…LGPHHLDEFK (69 aa)). A disulfide bond links Cys1479 and Cys1495. N-linked (GlcNAc...) asparagine glycosylation is present at Asn1487. Residues 1492 to 1534 (ETPCGSSFAVFYFISFYMLCAFLIINLFVAVIMDNFDYLTRDW) are phenylalkylamine binding. A helical membrane pass occupies residues 1500–1524 (AVFYFISFYMLCAFLIINLFVAVIM). Topologically, residues 1525–2221 (DNFDYLTRDW…QDSRVYVSSL (697 aa)) are cytoplasmic. The important for interaction with STAC1, STAC2 and STAC3 stretch occupies residues 1659 to 1686 (DEVTVGKFYATFLIQEYFRKFKKRKEQG). The calmodulin-binding IQ region stretch occupies residues 1665 to 1685 (KFYATFLIQEYFRKFKKRKEQ). The interval 1699 to 1718 (LQAGLRTLHDIGPEIRRAIS) is important for localization in at the junctional membrane. Phosphoserine occurs at positions 1718 and 1739. Positions 1778–1847 (INKAGSSQGD…TVEGHGPPLS (70 aa)) are disordered. Over residues 1799–1811 (STFTPSSYSSTGS) the composition is skewed to polar residues. The span at 1812-1822 (NANINNANNTA) shows a compositional bias: low complexity. Ser1981 carries the phosphoserine; by PKA modification. Disordered stretches follow at residues 2029–2063 (ASFPRPFATPPATPGSRGWPPQPVPTLRLEGVESS) and 2186–2221 (AGQDRAGGEEDAGCVRARGRPSEEELQDSRVYVSSL).

This sequence belongs to the calcium channel alpha-1 subunit (TC 1.A.1.11) family. CACNA1C subfamily. Component of a calcium channel complex consisting of a pore-forming alpha subunit (CACNA1C) and ancillary beta, gamma and delta subunits. The channel complex contains alpha, beta, gamma and delta subunits in a 1:1:1:1 ratio, i.e. it contains only one of each type of subunit. CACNA1C channel activity is modulated by ancillary subunits, such as CACNB1, CACNB2, CACNB3, CACNA2D1 and CACNA2D4. Interacts with the gamma subunits CACNG4, CACNG6, CACNG7 and CACNG8. Interacts with CACNB1. Interacts with CACNB2. Identified in a complex with CACNA2D4 and CACNB3. Interacts with CACNB3. Interacts with CACNA2D1. Interacts with CACNA2D4. Interacts with CALM1. Interacts (via the N-terminus and the C-terminal C and IQ motifs) with CABP1; this inhibits Ca(2+)-dependent channel inactivation. The binding via the C motif is calcium independent whereas the binding via IQ requires the presence of calcium and is mutually exclusive with calmodulin binding. The binding to the cytoplasmic N-terminal domain is calcium independent but is essential for the channel modulation. Interacts (via C-terminal CDB motif) with CABP5; in a calcium-dependent manner. Interacts with CIB1; the interaction increases upon cardiomyocytes hypertrophy. Interacts with STAC2 and STAC3; this inhibits channel inactivation. As to quaternary structure, (Microbial infection) Interacts with influenzavirus H1 hemagglutinin. Post-translationally, phosphorylation by PKA at Ser-1981 activates the channel. Elevated levels of blood glucose lead to increased phosphorylation by PKA. In terms of tissue distribution, detected throughout the brain, including hippocampus, cerebellum and amygdala, throughout the heart and vascular system, including ductus arteriosus, in urinary bladder, and in retina and sclera in the eye. Expressed in brain, heart, jejunum, ovary, pancreatic beta-cells and vascular smooth muscle. Overall expression is reduced in atherosclerotic vascular smooth muscle.

It localises to the cell membrane. Its subcellular location is the sarcolemma. It is found in the perikaryon. The protein resides in the postsynaptic density membrane. The protein localises to the cell projection. It localises to the dendrite. Its subcellular location is the T-tubule. It carries out the reaction Ca(2+)(in) = Ca(2+)(out). With respect to regulation, inhibited by dihydropyridines (DHP), such as isradipine. Inhibited by nifedipine. Channel activity is regulated by Ca(2+) and calmodulin. Binding of STAC1, STAC2 or STAC3 to a region that overlaps with the calmodulin binding site inhibits channel inactivation by Ca(2+) and calmodulin. Binding of calmodulin or CABP1 at the same regulatory sites results in opposite effects on the channel function. Shear stress and pressure increases calcium channel activity. Pore-forming, alpha-1C subunit of the voltage-gated calcium channel that gives rise to L-type calcium currents. Mediates influx of calcium ions into the cytoplasm, and thereby triggers calcium release from the sarcoplasm. Plays an important role in excitation-contraction coupling in the heart. Required for normal heart development and normal regulation of heart rhythm. Required for normal contraction of smooth muscle cells in blood vessels and in the intestine. Essential for normal blood pressure regulation via its role in the contraction of arterial smooth muscle cells. Long-lasting (L-type) calcium channels belong to the 'high-voltage activated' (HVA) group. In terms of biological role, pore-forming, alpha-1C subunit of the voltage-gated calcium channel that gives rise to L-type calcium currents. Functionally, (Microbial infection) Acts as a receptor for Influenzavirus. May play a critical role in allowing virus entry when sialylated and expressed on lung tissues. The polypeptide is Voltage-dependent L-type calcium channel subunit alpha-1C (CACNA1C) (Homo sapiens (Human)).